Reading from the N-terminus, the 368-residue chain is tRNA N6-adenosine threonylcarbamoyltransferase (368 aa).

Positions 108 and 112 each coordinate Fe cation. Substrate-binding positions include leucine 149–glycine 153, aspartate 183, glycine 196, aspartate 200, and asparagine 301. Aspartate 329 provides a ligand contact to Fe cation.

It belongs to the KAE1 / TsaD family. Fe(2+) serves as cofactor.

It is found in the cytoplasm. The enzyme catalyses L-threonylcarbamoyladenylate + adenosine(37) in tRNA = N(6)-L-threonylcarbamoyladenosine(37) in tRNA + AMP + H(+). Required for the formation of a threonylcarbamoyl group on adenosine at position 37 (t(6)A37) in tRNAs that read codons beginning with adenine. Is involved in the transfer of the threonylcarbamoyl moiety of threonylcarbamoyl-AMP (TC-AMP) to the N6 group of A37, together with TsaE and TsaB. TsaD likely plays a direct catalytic role in this reaction. This is tRNA N6-adenosine threonylcarbamoyltransferase from Paenarthrobacter aurescens (strain TC1).